The primary structure comprises 771 residues: DNA polymerase 1 (771 aa).

Belongs to the DNA polymerase type-B family.

It carries out the reaction DNA(n) + a 2'-deoxyribonucleoside 5'-triphosphate = DNA(n+1) + diphosphate. This is DNA polymerase 1 (polI) from Pyrococcus abyssi.